Consider the following 602-residue polypeptide: RNA-binding NOB1-like protein (602 aa).

Positions 1–25 (MDPKPTSMWSSIVKKDPPSKPPVND) are disordered. In terms of domain architecture, PINc spans 48 to 134 (VVDANAIIEG…LKLIALSYTL (87 aa)). Disordered stretches follow at residues 258–278 (SQGQ…VSRS) and 301–331 (IQKD…GEDI). Residues 301–329 (IQKDQEADKARHTKEANETHAKDSGKNGE) show a composition bias toward basic and acidic residues. Positions 331 to 365 (ISSILKDMRLEEESLRALQEETEETNAEATLINGE) form a coiled coil. The NOB1 zinc-finger motif lies at 452–522 (IRQLHRWILK…QYSIPMPKGG (71 aa)). Residues Cys-462, Cys-465, Cys-477, and Cys-480 each contribute to the Zn(2+) site.

The protein belongs to the NOB1 family. In terms of assembly, component of the small ribosomal subunit, ribosomal RNA processing complex (SSU RRP complex). Highly expressed in flowers and siliques and at lower levels in roots, hypocotyls, stems, leaves and seeds.

It localises to the nucleus. The protein resides in the nucleoplasm. Its subcellular location is the cytoplasm. In terms of biological role, essential protein required during embryogenesis and pollen development. Endonuclease cleaving pre-rRNA at the 3' end of the mature 18S rRNA (D-site); cleaves 20S pre-rRNA in the cytoplasm. Required for processing of 20S pre-rRNA precursor and biogenesis of 40S ribosomal subunits. The protein is RNA-binding NOB1-like protein of Arabidopsis thaliana (Mouse-ear cress).